A 640-amino-acid polypeptide reads, in one-letter code: PTS system mannitol-specific EIICBA component (640 aa).

Residues 12–343 enclose the PTS EIIC type-2 domain; sequence LGRFLSAMIM…LKISNRNHYV (332 aa). The next 6 helical transmembrane spans lie at 24-45, 50-70, 134-155, 165-185, 273-292, and 313-334; these read ISVF…WCPN, KVLS…TGGY, SVGI…PMIE, VNLM…EPAK, LILG…GGLI, and VINL…CMLL. Residues 379-475 form the PTS EIIB type-2 domain; sequence RNIIFACDAG…YLVENNLDNN (97 aa). Catalysis depends on cysteine 385, which acts as the Phosphocysteine intermediate; for EIIB activity. A Phosphocysteine; by EIIA modification is found at cysteine 385. In terms of domain architecture, PTS EIIA type-2 spans 496-638; that stretch reads FSLTKENIFL…DDVLYLFSRK (143 aa). The active-site Tele-phosphohistidine intermediate; for EIIA activity is the histidine 556. Histidine 556 carries the post-translational modification Phosphohistidine; by HPr.

As to quaternary structure, homodimer. Post-translationally, an intramolecular phosphotransfer takes places between His-556 and Cys-385.

It is found in the cell inner membrane. It catalyses the reaction D-mannitol(out) + N(pros)-phospho-L-histidyl-[protein] = D-mannitol 1-phosphate(in) + L-histidyl-[protein]. In terms of biological role, the phosphoenolpyruvate-dependent sugar phosphotransferase system (sugar PTS), a major carbohydrate active transport system, catalyzes the phosphorylation of incoming sugar substrates concomitantly with their translocation across the cell membrane. This system is involved in D-mannitol transport. The chain is PTS system mannitol-specific EIICBA component (mtlA) from Buchnera aphidicola subsp. Baizongia pistaciae (strain Bp).